The primary structure comprises 499 residues: MSRLQTEEQAVDSEGDSSLHRRNEEGTQSSHRMLGFSDALLSIIATVMILPVTHTEISPEQQFDKSIQKLLATRIAVYLMTFLIVTVAWTAHTRLFQVVGKIDDTLALLNLACMMTITLLPYTFSLMVTFPDVPLGIFLFCVCVIAIGSVQAMIVGYAFHFPHLLNPQIQCSTHRDLSRRHILHLVLRGPALCFVAAVFSLFFFPLSYLLMVTVIFLPHISKATTWCKDKLMGQRESPAHDMEPFSIDLHAPLSKERVEAFSDGVYAIVATLLILDICEDNVPDPKDVQEKFSGSLVAALGAYGPQFLAYFGSFATVGLLWFAHHSLFLHVRKATQTMGLLNILSLAFVGGLPLAYQQTSAFARQPHDELERVRVSCAIIFFASIFQFAIWTTALLHQTETLQPAVQFGGQEHAFMFAKLALYPCASLLAFAATCLLSRFSTAIFHLMQISVPFAFLLLRLLVRLALAGLQVLRGLWPHHPQQDQSEPEAQSQLLPDPC.

Over 1–30 (MSRLQTEEQAVDSEGDSSLHRRNEEGTQSS) the chain is Cytoplasmic. Positions 1-30 (MSRLQTEEQAVDSEGDSSLHRRNEEGTQSS) are disordered. Threonine 6 carries the phosphothreonine modification. The chain crosses the membrane as a helical span at residues 31–53 (HRMLGFSDALLSIIATVMILPVT). A RxxxFSD motif 1 motif is present at residues 32-38 (RMLGFSD). The Lumenal segment spans residues 54–74 (HTEISPEQQFDKSIQKLLATR). The segment at 55 to 60 (TEISPE) is short helix H1-1. The segment at 62-68 (QFDKSIQ) is short helix H2-1. A helical membrane pass occupies residues 75–97 (IAVYLMTFLIVTVAWTAHTRLFQ). The Cytoplasmic portion of the chain corresponds to 98–103 (VVGKID). The chain crosses the membrane as a helical span at residues 104-125 (DTLALLNLACMMTITLLPYTFS). At 126–135 (LMVTFPDVPL) the chain is on the lumenal side. The chain crosses the membrane as a helical span at residues 136-157 (GIFLFCVCVIAIGSVQAMIVGY). The Cytoplasmic segment spans residues 158–181 (AFHFPHLLNPQIQCSTHRDLSRRH). Residues 182–202 (ILHLVLRGPALCFVAAVFSLF) traverse the membrane as a helical segment. Over 203 to 207 (FFPLS) the chain is Lumenal. The helical transmembrane segment at 208–227 (YLLMVTVIFLPHISKATTWC) threads the bilayer. The Cytoplasmic portion of the chain corresponds to 228 to 254 (KDKLMGQRESPAHDMEPFSIDLHAPLS). The helical transmembrane segment at 255–279 (KERVEAFSDGVYAIVATLLILDICE) threads the bilayer. The short motif at 257–263 (RVEAFSD) is the RxxxFSD motif 2 element. Residues 280 to 306 (DNVPDPKDVQEKFSGSLVAALGAYGPQ) lie on the Lumenal side of the membrane. Residues 285-293 (PKDVQEKFS) form a short helix H1-2 region. A short helix H2-2 region spans residues 295–301 (SLVAALG). The chain crosses the membrane as a helical span at residues 307-329 (FLAYFGSFATVGLLWFAHHSLFL). The Cytoplasmic segment spans residues 330–335 (HVRKAT). The chain crosses the membrane as a helical span at residues 336–357 (QTMGLLNILSLAFVGGLPLAYQ). Residues 358–372 (QTSAFARQPHDELER) are Lumenal-facing. The helical transmembrane segment at 373–393 (VRVSCAIIFFASIFQFAIWTT) threads the bilayer. Residues 394-413 (ALLHQTETLQPAVQFGGQEH) are Cytoplasmic-facing. Residues 414-437 (AFMFAKLALYPCASLLAFAATCLL) form a helical membrane-spanning segment. The Lumenal segment spans residues 438–439 (SR). The chain crosses the membrane as a helical span at residues 440–466 (FSTAIFHLMQISVPFAFLLLRLLVRLA). Over 467-499 (LAGLQVLRGLWPHHPQQDQSEPEAQSQLLPDPC) the chain is Cytoplasmic.

It belongs to the TMEM175 family. As to quaternary structure, homodimer. Interacts with AKT (AKT1, AKT2 or AKT3); leading to formation of the lysoK(GF) complex, which activates the channel. Interacts with LAMP1; inhibiting the proton channel activity of TMEM175. Interacts with LAMP2; inhibiting the proton channel activity of TMEM175.

The protein resides in the endosome membrane. It is found in the lysosome membrane. The enzyme catalyses H(+)(in) = H(+)(out). It carries out the reaction K(+)(in) = K(+)(out). Active at low pH (under pH 4.6): proton channel activity is activated by luminal side protons. Polyunsaturated fatty acids, such as arachidonic acid, also activate the channel activity. Proton channel activity is directly inhibited by LAMP1 or LAMP2, facilitating lysosomal acidification. Channel activity is activated following interaction with AKT (AKT1, AKT2 or AKT3): interaction promotes activation from closed to an open state. Activation by AKT is independent of AKT serine/threonine-protein kinase activity. Its function is as follows. Proton-activated proton channel that catalyzes proton efflux from endosomes and lysosomes to maintain a steady-state pH. Activated at low pH (under pH 4.6) by luminal side protons: selectively mediates lysosomal proton release from lysosomes, eliciting a proton leak that balances V-ATPase activity to maintain pH homeostasis. Regulation of lumenal pH stability is required for autophagosome-lysosome fusion. Also acts as a potassium channel at higher pH, regulating potassium conductance in endosomes and lysosomes. Constitutes the pore-forming subunit of the lysoK(GF) complex, a complex activated by extracellular growth factors. The lysoK(GF) complex is composed of TMEM175 and AKT (AKT1, AKT2 or AKT3), a major target of growth factor receptors: in the complex, TMEM175 channel is opened by conformational changes by AKT, leading to its activation. The lysoK(GF) complex is required to protect neurons against stress-induced damage. The sequence is that of Endosomal/lysosomal proton channel TMEM175 from Mus musculus (Mouse).